Reading from the N-terminus, the 508-residue chain is Maturase K (508 aa).

This sequence belongs to the intron maturase 2 family. MatK subfamily.

The protein localises to the plastid. Its subcellular location is the chloroplast. Functionally, usually encoded in the trnK tRNA gene intron. Probably assists in splicing its own and other chloroplast group II introns. This chain is Maturase K, found in Coronilla varia (Crown vetch).